The primary structure comprises 155 residues: MSENTIYSGLKQLGSHTDIPLTPEEAVLERVANPQEGTPYCVRFTAPEFSSLCPMTGQPDFAHLVIDYVPGKWLVESKSLKLFLFSFRNHGAFHEDCTVTIGKRLVDLLEPEWLRIGGYWYPRGGIPIDVFYQTGAAPLNVWIPEQGVANYRGRG.

The active-site Thioimide intermediate is C53. D60 functions as the Proton donor in the catalytic mechanism. Substrate contacts are provided by residues 75–77 (VES) and 94–95 (HE).

It belongs to the GTP cyclohydrolase I family. QueF type 1 subfamily.

It localises to the cytoplasm. It catalyses the reaction 7-aminomethyl-7-carbaguanine + 2 NADP(+) = 7-cyano-7-deazaguanine + 2 NADPH + 3 H(+). It functions in the pathway tRNA modification; tRNA-queuosine biosynthesis. Functionally, catalyzes the NADPH-dependent reduction of 7-cyano-7-deazaguanine (preQ0) to 7-aminomethyl-7-deazaguanine (preQ1). This Brucella abortus (strain S19) protein is NADPH-dependent 7-cyano-7-deazaguanine reductase.